A 24-amino-acid chain; its full sequence is Hemocyanin subunit 4e (24 aa).

It belongs to the tyrosinase family. Hemocyanin subfamily. Hemolymph.

The protein resides in the secreted. Its subcellular location is the extracellular space. Functionally, hemocyanins are copper-containing oxygen carriers occurring freely dissolved in the hemolymph of many mollusks and arthropods. This Maja squinado (Mediterranean spider crab) protein is Hemocyanin subunit 4e.